Here is a 299-residue protein sequence, read N- to C-terminus: ATP phosphoribosyltransferase (299 aa).

Belongs to the ATP phosphoribosyltransferase family. Long subfamily. Mg(2+) is required as a cofactor.

It localises to the cytoplasm. The enzyme catalyses 1-(5-phospho-beta-D-ribosyl)-ATP + diphosphate = 5-phospho-alpha-D-ribose 1-diphosphate + ATP. It participates in amino-acid biosynthesis; L-histidine biosynthesis; L-histidine from 5-phospho-alpha-D-ribose 1-diphosphate: step 1/9. Feedback inhibited by histidine. Functionally, catalyzes the condensation of ATP and 5-phosphoribose 1-diphosphate to form N'-(5'-phosphoribosyl)-ATP (PR-ATP). Has a crucial role in the pathway because the rate of histidine biosynthesis seems to be controlled primarily by regulation of HisG enzymatic activity. This Campylobacter jejuni subsp. doylei (strain ATCC BAA-1458 / RM4099 / 269.97) protein is ATP phosphoribosyltransferase.